The sequence spans 269 residues: Carbohydrate metabolism regulator TYE7 (269 aa).

Residues 146-178 (QPKIKQEPGTKAATKPKRRAPRKKLTESQKKAH) are disordered. Residues 159–168 (TKPKRRAPRK) are compositionally biased toward basic residues. The span at 169 to 178 (KLTESQKKAH) shows a compositional bias: basic and acidic residues. One can recognise a bHLH domain in the interval 173–244 (SQKKAHNKIE…EKATEYILHL (72 aa)).

As to quaternary structure, efficient DNA binding requires dimerization with another bHLH protein.

The protein localises to the nucleus. Its function is as follows. Key transcriptional regulator of carbohydrate metabolism. Binds the promoter sequences of the glycolytic genes at the CANNTG motif and activates their expression during growth on either fermentable or non-fermentable carbon sources as well as under hypoxic growth conditions. Complete glycolytic activation by GAL4 and TYE7 is required for full virulence. Involved in biofilm formation and negatively regulates hyphal formation under hypoxia. Also controls the expression of the copper transport protein CTR1. The polypeptide is Carbohydrate metabolism regulator TYE7 (TYE7) (Candida albicans (strain SC5314 / ATCC MYA-2876) (Yeast)).